Consider the following 107-residue polypeptide: Glutaredoxin 4 (107 aa).

A Glutaredoxin domain is found at 4–106 (LDKIKKQISE…TLLAEVAAKH (103 aa)). Lysine 21 is a glutathione binding site. Cysteine 29 serves as a coordination point for [2Fe-2S] cluster. Residues arginine 58, phenylalanine 70, and 83 to 84 (CD) contribute to the glutathione site.

It belongs to the glutaredoxin family. Monothiol subfamily. Homodimer.

Its subcellular location is the cytoplasm. Functionally, monothiol glutaredoxin involved in the biogenesis of iron-sulfur clusters. The polypeptide is Glutaredoxin 4 (grxD) (Haemophilus influenzae (strain 86-028NP)).